Reading from the N-terminus, the 306-residue chain is N-acetylmuramic acid 6-phosphate etherase (306 aa).

One can recognise an SIS domain in the interval I62–K225. The Proton donor role is filled by E90. E121 is a catalytic residue.

The protein belongs to the GCKR-like family. MurNAc-6-P etherase subfamily. Homodimer.

The catalysed reaction is N-acetyl-D-muramate 6-phosphate + H2O = N-acetyl-D-glucosamine 6-phosphate + (R)-lactate. Its pathway is amino-sugar metabolism; 1,6-anhydro-N-acetylmuramate degradation. The protein operates within amino-sugar metabolism; N-acetylmuramate degradation. It functions in the pathway cell wall biogenesis; peptidoglycan recycling. Its function is as follows. Specifically catalyzes the cleavage of the D-lactyl ether substituent of MurNAc 6-phosphate, producing GlcNAc 6-phosphate and D-lactate. Together with AnmK, is also required for the utilization of anhydro-N-acetylmuramic acid (anhMurNAc) either imported from the medium or derived from its own cell wall murein, and thus plays a role in cell wall recycling. This chain is N-acetylmuramic acid 6-phosphate etherase, found in Vibrio atlanticus (strain LGP32) (Vibrio splendidus (strain Mel32)).